Consider the following 124-residue polypeptide: Fluoride-specific ion channel FluC (124 aa).

The next 4 membrane-spanning stretches (helical) occupy residues Val4–Trp24, Ala32–Met52, Ile67–Thr87, and Ala101–Ala121. Na(+)-binding residues include Gly75 and Thr78.

It belongs to the fluoride channel Fluc/FEX (TC 1.A.43) family.

It is found in the cell inner membrane. It catalyses the reaction fluoride(in) = fluoride(out). Its activity is regulated as follows. Na(+) is not transported, but it plays an essential structural role and its presence is essential for fluoride channel function. In terms of biological role, fluoride-specific ion channel. Important for reducing fluoride concentration in the cell, thus reducing its toxicity. The sequence is that of Fluoride-specific ion channel FluC from Geotalea uraniireducens (strain Rf4) (Geobacter uraniireducens).